We begin with the raw amino-acid sequence, 145 residues long: Large ribosomal subunit protein uL15 (145 aa).

Residues Met1–Glu52 are disordered. 2 stretches are compositionally biased toward gly residues: residues Arg21–Val35 and Ser42–Glu52.

The protein belongs to the universal ribosomal protein uL15 family. As to quaternary structure, part of the 50S ribosomal subunit.

In terms of biological role, binds to the 23S rRNA. The chain is Large ribosomal subunit protein uL15 from Aeromonas hydrophila subsp. hydrophila (strain ATCC 7966 / DSM 30187 / BCRC 13018 / CCUG 14551 / JCM 1027 / KCTC 2358 / NCIMB 9240 / NCTC 8049).